Here is a 322-residue protein sequence, read N- to C-terminus: Malate dehydrogenase (322 aa).

NAD(+) contacts are provided by residues 10–15 and D34; that span reads GSGQIG. Residues R83 and R89 each contribute to the substrate site. NAD(+)-binding positions include N96 and 119 to 121; that span reads ITN. Positions 121 and 152 each coordinate substrate. H176 serves as the catalytic Proton acceptor.

This sequence belongs to the LDH/MDH superfamily. MDH type 3 family.

The catalysed reaction is (S)-malate + NAD(+) = oxaloacetate + NADH + H(+). Its function is as follows. Catalyzes the reversible oxidation of malate to oxaloacetate. This Bradyrhizobium diazoefficiens (strain JCM 10833 / BCRC 13528 / IAM 13628 / NBRC 14792 / USDA 110) protein is Malate dehydrogenase.